We begin with the raw amino-acid sequence, 253 residues long: MTEFVVLIPARLDSSRLPGKALADIHGKPMVVRVAEQAAKSKAARVVVATDHPDIQTVCQAHGIEAVMTSNRHESGTTRLAEAAAALKLPPHLVVVNVQGDEPLIAPELIDRTAEVLVENNVQMATAAHELHDFDELMNPNAVKVVLDKNRNAIYFSRAPIPYPRDAMRAGKREMPSETAVLRHIGIYAYRAGFLQRYAEMSVSPLETIESLEQLRVLWHGYPIAVETAKEAPAAGVDTQEDLDRVRAVFQTV.

It belongs to the KdsB family.

The protein localises to the cytoplasm. The enzyme catalyses 3-deoxy-alpha-D-manno-oct-2-ulosonate + CTP = CMP-3-deoxy-beta-D-manno-octulosonate + diphosphate. It functions in the pathway nucleotide-sugar biosynthesis; CMP-3-deoxy-D-manno-octulosonate biosynthesis; CMP-3-deoxy-D-manno-octulosonate from 3-deoxy-D-manno-octulosonate and CTP: step 1/1. The protein operates within bacterial outer membrane biogenesis; lipopolysaccharide biosynthesis. Functionally, activates KDO (a required 8-carbon sugar) for incorporation into bacterial lipopolysaccharide in Gram-negative bacteria. The sequence is that of 3-deoxy-manno-octulosonate cytidylyltransferase from Neisseria meningitidis serogroup A / serotype 4A (strain DSM 15465 / Z2491).